Consider the following 169-residue polypeptide: Peptide deformylase (169 aa).

The Fe cation site is built by C91 and H133. Residue E134 is part of the active site. Residue H137 participates in Fe cation binding.

Belongs to the polypeptide deformylase family. The cofactor is Fe(2+).

It carries out the reaction N-terminal N-formyl-L-methionyl-[peptide] + H2O = N-terminal L-methionyl-[peptide] + formate. Its function is as follows. Removes the formyl group from the N-terminal Met of newly synthesized proteins. Requires at least a dipeptide for an efficient rate of reaction. N-terminal L-methionine is a prerequisite for activity but the enzyme has broad specificity at other positions. This Citrobacter koseri (strain ATCC BAA-895 / CDC 4225-83 / SGSC4696) protein is Peptide deformylase.